The following is a 458-amino-acid chain: Ammonium transporter Rh type B (458 aa).

Over 1-13 (MAGSPSRAAGRRL) the chain is Cytoplasmic. The chain crosses the membrane as a helical span at residues 14 to 34 (QLPLLCLFLQGATAVLFAVFV). At 35 to 61 (RYNHKTDAALWHRSNHSNADNEFYFRY) the chain is on the extracellular side. Asn-49 carries N-linked (GlcNAc...) asparagine glycosylation. A helical transmembrane segment spans residues 62 to 82 (PSFQDVHAMVFVGFGFLMVFL). The Cytoplasmic segment spans residues 83 to 86 (QRYG). A helical membrane pass occupies residues 87-107 (FSSVGFTFLLAAFALQWSTLV). Topologically, residues 108–124 (QGFLHSFHGGHIHVGVE) are extracellular. A helical membrane pass occupies residues 125-145 (SMINADFCAGAVLISFGAVLG). Topologically, residues 146–149 (KTGP) are cytoplasmic. The helical transmembrane segment at 150–170 (AQLLLMALLEVVLFGINEFVL) threads the bilayer. The Extracellular portion of the chain corresponds to 171-178 (LHLLGVRD). A helical membrane pass occupies residues 179–201 (AGGSMTIHTFGAYFGLVLSRVLY). Residues 202 to 219 (RPQLEKSKHRQGSVYHSD) are Cytoplasmic-facing. The chain crosses the membrane as a helical span at residues 220–240 (LFTMIGTIFLWIFWPSFNAAL). The Extracellular segment spans residues 241 to 251 (TALGAGQHRTA). Residues 252–272 (LNTYYSLAASTLGTFALSALV) traverse the membrane as a helical segment. Over 273–282 (GEDGRLDMVH) the chain is Cytoplasmic. A helical transmembrane segment spans residues 283 to 303 (IQNAALTGGVVVGTSSKMMLT). Residue Pro-304 is a topological domain, extracellular. Residues 305–325 (FGALAAGFLAGTVSTLGYKFF) traverse the membrane as a helical segment. The Cytoplasmic portion of the chain corresponds to 326–346 (TPILESKFKVQDTCGVHNLHG). A helical transmembrane segment spans residues 347–367 (MPGVLGALLGVLVAGLATHEA). Residues 368 to 393 (YGDGLESVFPLIAEGQRSATSQAMHQ) lie on the Extracellular side of the membrane. Residues 394-414 (LFGLFVTLMFASVGGGLGGLL) form a helical membrane-spanning segment. Residues 415–458 (LKLPFLDSPPDSQCYEDQVHWQVPGEHEDKAQRPLRVEEADTYA) are Cytoplasmic-facing. The tract at residues 416–424 (KLPFLDSPP) is interaction with ANK3. Positions 429–432 (YEDQ) match the Basolateral sorting signal motif. The interval 439–458 (GEHEDKAQRPLRVEEADTYA) is disordered.

It belongs to the ammonium transporter (TC 2.A.49) family. Rh subfamily. As to quaternary structure, interacts (via C-terminus) with ANK2 and ANK3; required for targeting to the basolateral membrane. In terms of processing, N-glycosylated.

The protein resides in the cell membrane. It localises to the basolateral cell membrane. It carries out the reaction NH4(+)(in) = NH4(+)(out). The enzyme catalyses methylamine(out) = methylamine(in). The catalysed reaction is CO2(out) = CO2(in). Functionally, ammonium transporter involved in the maintenance of acid-base homeostasis. Transports ammonium and its related derivative methylammonium across the basolateral plasma membrane of epithelial cells likely contributing to renal transepithelial ammonia transport and ammonia metabolism. May transport either NH4(+) or NH3 ammonia species predominantly mediating an electrogenic NH4(+) transport. May act as a CO2 channel providing for renal acid secretion. The chain is Ammonium transporter Rh type B (RHBG) from Gorilla gorilla gorilla (Western lowland gorilla).